Reading from the N-terminus, the 170-residue chain is MDTQRDSPSLGRWSLVLLLLGLVMPLAIVAQVLSYQEAVLRAIDGINQRSSDANLYRLLDLDPRPTMDGDPDTPKPVSFTVKETVCPRTTQQSPEDCDFKKDGLVKRCMGTVTLNQARDSFDISCDKDNRRFALLGNFFRKAREKIGKEFKRIVQRIKDFLQHLVPRTEA.

An N-terminal signal peptide occupies residues 1-30 (MDTQRDSPSLGRWSLVLLLLGLVMPLAIVA). The propeptide at 31-131 (QVLSYQEAVL…DISCDKDNRR (101 aa)) is cathelin-like domain (CLD). Intrachain disulfides connect Cys86–Cys97 and Cys108–Cys125. The tract at residues 150–162 (FKRIVQRIKDFLQ) is active core.

It belongs to the cathelicidin family. As to quaternary structure, monomer, homodimer or homotrimer (in vitro). Oligomerizes as tetra- or hexamer in solution (in vitro). Post-translationally, proteolytically cleaved by proteinase PRTN3 into antibacterial peptide LL-37. Proteolytically cleaved by cathepsin CTSG and neutrophil elastase ELANE. In terms of processing, resistant to proteolytic degradation in solution, and when bound to both zwitterionic (mimicking mammalian membranes) and negatively charged membranes (mimicking bacterial membranes). After secretion onto the skin surface, the CAMP gene product is processed by a serine protease-dependent mechanism into multiple novel antimicrobial peptides distinct from and shorter than cathelicidin LL-37. These peptides show enhanced antimicrobial action, acquiring the ability to kill skin pathogens such as S.aureus, E.coli and C.albicans. These peptides have lost the ability to stimulate CXCL8/IL8 release from keratinocytes. The peptides act synergistically, killing bacteria at lower concentrations when present together, and maintain activity at increased salt condition.

Its subcellular location is the secreted. It localises to the vesicle. Its function is as follows. Antimicrobial protein that is an integral component of the innate immune system. Binds to bacterial lipopolysaccharides (LPS). Acts via neutrophil N-formyl peptide receptors to enhance the release of CXCL2. Postsecretory processing generates multiple cathelicidin antimicrobial peptides with various lengths which act as a topical antimicrobial defense in sweat on skin. The unprocessed precursor form, cathelicidin antimicrobial peptide, inhibits the growth of Gram-negative E.coli and E.aerogenes with efficiencies comparable to that of the mature peptide LL-37 (in vitro). In terms of biological role, antimicrobial peptide that is an integral component of the innate immune system. Binds to bacterial lipopolysaccharides (LPS). Causes membrane permeabilization by forming transmembrane pores (in vitro). Causes lysis of E.coli. Exhibits antimicrobial activity against Gram-negative bacteria such as P.aeruginosa, S.typhimurium, E.aerogenes, E.coli and P.syringae, Gram-positive bacteria such as L.monocytogenes, S.epidermidis, S.pyogenes and S.aureus, as well as vancomycin-resistant enterococci (in vitro). Exhibits antimicrobial activity against methicillin-resistant S.aureus, P.mirabilis, and C.albicans in low-salt media, but not in media containing 100 mM NaCl (in vitro). Forms chiral supramolecular assemblies with quinolone signal (PQS) molecules of P.aeruginosa, which may lead to interference of bacterial quorum signaling and perturbance of bacterial biofilm formation. May form supramolecular fiber-like assemblies on bacterial membranes. Induces cytokine and chemokine producation as well as TNF/TNFA and CSF2/GMCSF production in normal human keratinocytes. Exhibits hemolytic activity against red blood cells. Exhibits antimicrobial activity against E.coli and B.megaterium (in vitro). In Nomascus leucogenys (Northern white-cheeked gibbon), this protein is Cathelicidin antimicrobial peptide.